Consider the following 305-residue polypeptide: tRNA dimethylallyltransferase (305 aa).

ATP is bound at residue 8–15; the sequence is GPTASGKT. Residue 10 to 15 coordinates substrate; the sequence is TASGKT. An interaction with substrate tRNA region spans residues 33–36; the sequence is DSQQ.

It belongs to the IPP transferase family. Monomer. Mg(2+) is required as a cofactor.

The catalysed reaction is adenosine(37) in tRNA + dimethylallyl diphosphate = N(6)-dimethylallyladenosine(37) in tRNA + diphosphate. Functionally, catalyzes the transfer of a dimethylallyl group onto the adenine at position 37 in tRNAs that read codons beginning with uridine, leading to the formation of N6-(dimethylallyl)adenosine (i(6)A). The sequence is that of tRNA dimethylallyltransferase from Anaeromyxobacter dehalogenans (strain 2CP-1 / ATCC BAA-258).